The sequence spans 400 residues: Diphosphomevalonate decarboxylase (400 aa).

Ala-2 is subject to N-acetylalanine. (R)-5-diphosphomevalonate contacts are provided by residues 23–26 (YWGK) and Arg-78. Ser-96 carries the phosphoserine modification. Residues 156–161 (SGSACR) and Thr-212 each bind (R)-5-diphosphomevalonate.

The protein belongs to the diphosphomevalonate decarboxylase family. As to quaternary structure, homodimer. In terms of tissue distribution, expressed in heart, skeletal muscle, lung, liver, brain, pancreas, kidney and placenta.

The protein localises to the cytoplasm. The enzyme catalyses (R)-5-diphosphomevalonate + ATP = isopentenyl diphosphate + ADP + phosphate + CO2. Its pathway is steroid biosynthesis; cholesterol biosynthesis. In terms of biological role, catalyzes the ATP dependent decarboxylation of (R)-5-diphosphomevalonate to form isopentenyl diphosphate (IPP). Functions in the mevalonate (MVA) pathway leading to isopentenyl diphosphate (IPP), a key precursor for the biosynthesis of isoprenoids and sterol synthesis. In Homo sapiens (Human), this protein is Diphosphomevalonate decarboxylase (MVD).